Reading from the N-terminus, the 910-residue chain is NADH-quinone oxidoreductase subunit G (910 aa).

Positions M1–T83 constitute a 2Fe-2S ferredoxin-type domain. 4 residues coordinate [2Fe-2S] cluster: C34, C45, C48, and C67. One can recognise a 4Fe-4S His(Cys)3-ligated-type domain in the interval T83–T122. The [4Fe-4S] cluster site is built by H99, C103, C106, C112, C151, C154, C157, C201, C228, C231, C235, and C263. One can recognise a 4Fe-4S Mo/W bis-MGD-type domain in the interval M221 to N277.

It belongs to the complex I 75 kDa subunit family. As to quaternary structure, composed of 13 different subunits. Subunits NuoCD, E, F, and G constitute the peripheral sector of the complex. The cofactor is [2Fe-2S] cluster. [4Fe-4S] cluster serves as cofactor.

The enzyme catalyses a quinone + NADH + 5 H(+)(in) = a quinol + NAD(+) + 4 H(+)(out). Its function is as follows. NDH-1 shuttles electrons from NADH, via FMN and iron-sulfur (Fe-S) centers, to quinones in the respiratory chain. Couples the redox reaction to proton translocation (for every two electrons transferred, four hydrogen ions are translocated across the cytoplasmic membrane), and thus conserves the redox energy in a proton gradient. The polypeptide is NADH-quinone oxidoreductase subunit G (nuoG) (Buchnera aphidicola subsp. Schizaphis graminum (strain Sg)).